Here is a 307-residue protein sequence, read N- to C-terminus: Cyclin-dependent kinase 5 activator 1 (307 aa).

Residue Gly2 is the site of N-myristoyl glycine attachment. Ser8 carries the post-translational modification Phosphoserine; by CDK5. The segment at 97-136 (TFAQPPPAQPPAPPASQLSGSQTGGSSSVKKAPHPAVTSA) is disordered. Residues 100–110 (QPPPAQPPAPP) are compositionally biased toward pro residues. Low complexity predominate over residues 111–124 (ASQLSGSQTGGSSS). Thr138 bears the Phosphothreonine; by CDK5 mark.

Belongs to the cyclin-dependent kinase 5 activator family. In terms of assembly, heterodimer composed of a catalytic subunit CDK5 and a regulatory subunit CDK5R1 (p25) and macromolecular complex composed of at least CDK5, CDK5R1 (p35) and CDK5RAP1 or CDK5RAP2 or CDK5RAP3. Only the heterodimer shows kinase activity. Interacts with EPHA4 and NGEF; may mediate the activation of NGEF by EPHA4. Interacts with RASGRF2. The complex p35/CDK5 interacts with CLOCK. Post-translationally, the p35 form is proteolytically cleaved by calpain, giving rise to the p25 form. P35 has a 5 to 10 fold shorter half-life compared to p25. The conversion results in deregulation of the CDK5 kinase: p25/CDK5 kinase displays an increased and altered tau phosphorylation in comparison to the p35/CDK5 kinase in vivo. In terms of processing, myristoylated. A proper myristoylation signal is essential for the proper distribution of p35. Ubiquitinated, leading to its degradation: degradation of p35 by proteasome results in down-regulation of CDK5 activity. During this process, CDK5 phosphorylates p35 and induces its ubiquitination and subsequent degradation. Ubiquitinated by the CRL2(FEM1B) complex, which recognizes the -Gly-Leu-Asp-Arg C-degron at the C-terminus, leading to its degradation. Post-translationally, phosphorylation at Ser-8 and Thr-138 by CDK5 prevents calpain-mediated proteolysis. Brain and neuron specific.

Its subcellular location is the cell membrane. The protein localises to the cell projection. It localises to the neuron projection. It is found in the nucleus. The protein resides in the cytoplasm. Its subcellular location is the perinuclear region. The protein localises to the perikaryon. In terms of biological role, p35 is a neuron specific activator of CDK5. The complex p35/CDK5 is required for neurite outgrowth and cortical lamination. Involved in dendritic spine morphogenesis by mediating the EFNA1-EPHA4 signaling. Activator of TPKII. The complex p35/CDK5 participates in the regulation of the circadian clock by modulating the function of CLOCK protein: phosphorylates CLOCK at 'Thr-451' and 'Thr-461' and regulates the transcriptional activity of the CLOCK-BMAL1 heterodimer in association with altered stability and subcellular distribution. The chain is Cyclin-dependent kinase 5 activator 1 (CDK5R1) from Homo sapiens (Human).